We begin with the raw amino-acid sequence, 402 residues long: 4-hydroxy-3-methylbut-2-enyl diphosphate reductase (402 aa).

Cys66 provides a ligand contact to [4Fe-4S] cluster. His96 is a binding site for (2E)-4-hydroxy-3-methylbut-2-enyl diphosphate. Position 96 (His96) interacts with dimethylallyl diphosphate. His96 serves as a coordination point for isopentenyl diphosphate. Cys157 contacts [4Fe-4S] cluster. His185 contributes to the (2E)-4-hydroxy-3-methylbut-2-enyl diphosphate binding site. His185 lines the dimethylallyl diphosphate pocket. His185 is an isopentenyl diphosphate binding site. Catalysis depends on Glu187, which acts as the Proton donor. Residue Thr250 participates in (2E)-4-hydroxy-3-methylbut-2-enyl diphosphate binding. Residue Cys288 coordinates [4Fe-4S] cluster. (2E)-4-hydroxy-3-methylbut-2-enyl diphosphate contacts are provided by Ser317, Ser318, Asn319, and Ser379. 4 residues coordinate dimethylallyl diphosphate: Ser317, Ser318, Asn319, and Ser379. 4 residues coordinate isopentenyl diphosphate: Ser317, Ser318, Asn319, and Ser379.

The protein belongs to the IspH family. The cofactor is [4Fe-4S] cluster.

The catalysed reaction is isopentenyl diphosphate + 2 oxidized [2Fe-2S]-[ferredoxin] + H2O = (2E)-4-hydroxy-3-methylbut-2-enyl diphosphate + 2 reduced [2Fe-2S]-[ferredoxin] + 2 H(+). It carries out the reaction dimethylallyl diphosphate + 2 oxidized [2Fe-2S]-[ferredoxin] + H2O = (2E)-4-hydroxy-3-methylbut-2-enyl diphosphate + 2 reduced [2Fe-2S]-[ferredoxin] + 2 H(+). Its pathway is isoprenoid biosynthesis; dimethylallyl diphosphate biosynthesis; dimethylallyl diphosphate from (2E)-4-hydroxy-3-methylbutenyl diphosphate: step 1/1. It functions in the pathway isoprenoid biosynthesis; isopentenyl diphosphate biosynthesis via DXP pathway; isopentenyl diphosphate from 1-deoxy-D-xylulose 5-phosphate: step 6/6. Its function is as follows. Catalyzes the conversion of 1-hydroxy-2-methyl-2-(E)-butenyl 4-diphosphate (HMBPP) into a mixture of isopentenyl diphosphate (IPP) and dimethylallyl diphosphate (DMAPP). Acts in the terminal step of the DOXP/MEP pathway for isoprenoid precursor biosynthesis. The polypeptide is 4-hydroxy-3-methylbut-2-enyl diphosphate reductase (Trichormus variabilis (strain ATCC 29413 / PCC 7937) (Anabaena variabilis)).